The chain runs to 251 residues: Triosephosphate isomerase (251 aa).

9–11 (NWK) lines the substrate pocket. The Electrophile role is filled by His-96. The Proton acceptor role is filled by Glu-168. Residues Gly-174, Ser-214, and 235 to 236 (GG) each bind substrate.

It belongs to the triosephosphate isomerase family. As to quaternary structure, homodimer.

The protein resides in the cytoplasm. The catalysed reaction is D-glyceraldehyde 3-phosphate = dihydroxyacetone phosphate. Its pathway is carbohydrate biosynthesis; gluconeogenesis. It functions in the pathway carbohydrate degradation; glycolysis; D-glyceraldehyde 3-phosphate from glycerone phosphate: step 1/1. In terms of biological role, involved in the gluconeogenesis. Catalyzes stereospecifically the conversion of dihydroxyacetone phosphate (DHAP) to D-glyceraldehyde-3-phosphate (G3P). The sequence is that of Triosephosphate isomerase from Porphyromonas gingivalis (strain ATCC 33277 / DSM 20709 / CIP 103683 / JCM 12257 / NCTC 11834 / 2561).